Here is a 1342-residue protein sequence, read N- to C-terminus: DNA-directed RNA polymerase subunit beta (1342 aa).

This sequence belongs to the RNA polymerase beta chain family. As to quaternary structure, the RNAP catalytic core consists of 2 alpha, 1 beta, 1 beta' and 1 omega subunit. When a sigma factor is associated with the core the holoenzyme is formed, which can initiate transcription.

The enzyme catalyses RNA(n) + a ribonucleoside 5'-triphosphate = RNA(n+1) + diphosphate. Functionally, DNA-dependent RNA polymerase catalyzes the transcription of DNA into RNA using the four ribonucleoside triphosphates as substrates. In Aeromonas hydrophila subsp. hydrophila (strain ATCC 7966 / DSM 30187 / BCRC 13018 / CCUG 14551 / JCM 1027 / KCTC 2358 / NCIMB 9240 / NCTC 8049), this protein is DNA-directed RNA polymerase subunit beta.